The following is a 308-amino-acid chain: D-alanine--D-alanine ligase (308 aa).

The ATP-grasp domain maps to 105 to 302; that stretch reads KAIFRSLGLA…FPDLCDRILD (198 aa). 133-188 is a binding site for ATP; it reads DLPFGLPCVVKPAGEGSSVGVHLVNAAAELGPACRDAAGYAGDVIVERYVKGTEVD. Mg(2+)-binding residues include aspartate 256, glutamate 269, and asparagine 271.

This sequence belongs to the D-alanine--D-alanine ligase family. The cofactor is Mg(2+). Mn(2+) serves as cofactor.

The protein resides in the cytoplasm. The enzyme catalyses 2 D-alanine + ATP = D-alanyl-D-alanine + ADP + phosphate + H(+). The protein operates within cell wall biogenesis; peptidoglycan biosynthesis. Functionally, cell wall formation. The polypeptide is D-alanine--D-alanine ligase (Anaeromyxobacter dehalogenans (strain 2CP-C)).